Here is a 393-residue protein sequence, read N- to C-terminus: NADH-quinone oxidoreductase subunit H 2 (393 aa).

Transmembrane regions (helical) follow at residues 13–33 (VLVT…IVLV), 79–99 (AIFW…FAVI), 112–132 (VGLL…ILGG), 158–178 (LAFA…QGIV), 186–206 (VWGI…YIIA), 240–260 (LYFL…VTLF), 278–298 (LNYG…FTLI), 309–329 (VLLG…IPMV), 333–353 (MIGL…MIWF), and 368–388 (IGWK…AVLG).

The protein belongs to the complex I subunit 1 family. In terms of assembly, NDH-1 is composed of 14 different subunits. Subunits NuoA, H, J, K, L, M, N constitute the membrane sector of the complex.

The protein localises to the cell inner membrane. It catalyses the reaction a quinone + NADH + 5 H(+)(in) = a quinol + NAD(+) + 4 H(+)(out). NDH-1 shuttles electrons from NADH, via FMN and iron-sulfur (Fe-S) centers, to quinones in the respiratory chain. The immediate electron acceptor for the enzyme in this species is believed to be ubiquinone. Couples the redox reaction to proton translocation (for every two electrons transferred, four hydrogen ions are translocated across the cytoplasmic membrane), and thus conserves the redox energy in a proton gradient. This subunit may bind ubiquinone. This is NADH-quinone oxidoreductase subunit H 2 from Solibacter usitatus (strain Ellin6076).